The sequence spans 237 residues: Flagellar L-ring protein (237 aa).

A signal peptide spans Met-1 to Gly-16. A lipid anchor (N-palmitoyl cysteine) is attached at Cys-17. The S-diacylglycerol cysteine moiety is linked to residue Cys-17. The disordered stretch occupies residues Pro-122–Val-143. A compositionally biased stretch (low complexity) spans Asp-124–Lys-140.

This sequence belongs to the FlgH family. As to quaternary structure, the basal body constitutes a major portion of the flagellar organelle and consists of four rings (L,P,S, and M) mounted on a central rod.

It localises to the cell outer membrane. The protein localises to the bacterial flagellum basal body. In terms of biological role, assembles around the rod to form the L-ring and probably protects the motor/basal body from shearing forces during rotation. This is Flagellar L-ring protein from Allorhizobium ampelinum (strain ATCC BAA-846 / DSM 112012 / S4) (Agrobacterium vitis (strain S4)).